The following is a 70-amino-acid chain: KHGSINCRLPPERGPCRGNITKYYYHNESRTCRTFSYGGCEGNSNNFRNRHYCMKYCARKRHGWLGTGWI.

The BPTI/Kunitz inhibitor domain maps to 7–57 (CRLPPERGPCRGNITKYYYHNESRTCRTFSYGGCEGNSNNFRNRHYCMKYC). Disulfide bonds link Cys7/Cys57, Cys16/Cys40, and Cys32/Cys53.

Belongs to the venom Kunitz-type family. Scorpion delta-Ktx subfamily. Delta-Ktx 1 sub-subfamily. Expressed by the venom gland.

It localises to the secreted. Functionally, serine protease inhibitor that inhibits 85% of the activity of trypsin at a molar ratio of 4:1 (Ki=760 nM). The chain is Kunitz-type serine protease inhibitor BmKTT-3 from Olivierus martensii (Manchurian scorpion).